We begin with the raw amino-acid sequence, 393 residues long: MASATAAAAPGEAEETTRLRKPRFSFEENQILIREVRAHYPQLYGAQSRRVSVAERRRVWDSIATKINGITSWKRTGQEVQKRWNDFKRRTKEKLARVPHSTQGAGPAAEDAFSAEEETIFAILGPGVAGPGAGSGAEESRAAASSQPQASTASTQRYVLSEDRRQDRRADTPAQSKGGSSSPESWARPSCNPQEAKERESTSPAAMQPVQLPRLALSPPLPAPPPPPTALAQVAPSSPSPTPPRPTSAPEQSLDFLRAQQETANAIRELAGTLRQGLAKLSEALSALLPLLPGTPADPLPPPPPPPPPPPPKPVLPPSAPKVELAPEPVSVVAAVVDGAVVAARGVIISPRSEEGVPKPLPPAPPLPLHDSPPHKRRKGFPTRKRRGRWKSP.

Over residues 1–11 the composition is skewed to low complexity; that stretch reads MASATAAAAPG. The tract at residues 1-21 is disordered; the sequence is MASATAAAAPGEAEETTRLRK. The Myb-like domain maps to 16–88; that stretch reads TTRLRKPRFS…EVQKRWNDFK (73 aa). Residues 87-90 carry the Nuclear localization signal motif; the sequence is FKRR. Disordered stretches follow at residues 125–254, 290–323, and 348–393; these read GPGV…EQSL, PLLP…APKV, and IISP…WKSP. Over residues 142-157 the composition is skewed to low complexity; that stretch reads AAASSQPQASTASTQR. Residues 160–171 show a composition bias toward basic and acidic residues; that stretch reads LSEDRRQDRRAD. The span at 173–184 shows a compositional bias: polar residues; it reads PAQSKGGSSSPE. 4 stretches are compositionally biased toward pro residues: residues 219 to 229, 238 to 247, 296 to 320, and 359 to 368; these read PPLPAPPPPPT, SPSPTPPRPT, PADP…PPSA, and KPLPPAPPLP. Positions 375–393 are enriched in basic residues; it reads HKRRKGFPTRKRRGRWKSP. Short sequence motifs (nuclear localization signal) lie at residues 376 to 379 and 384 to 387; these read KRRK and RKRR.

In terms of assembly, interacts with PFN1. Homodimer and heterodimer with PFN1. Ubiquitous. Highly expressed in brain, liver and testis. Moderate expression in heart, lung and skeletal muscle. Low expression in spleen and kidney.

It is found in the nucleus. Functionally, transcriptional repressor; DNA-binding protein that specifically recognizes the core sequence 5'-YAAC[GT]G-3'. Dimerization with PFN1 reduces its DNA-binding capacity. This chain is Myb-related transcription factor, partner of profilin (Mypop), found in Mus musculus (Mouse).